We begin with the raw amino-acid sequence, 293 residues long: tRNA pseudouridine synthase B (293 aa).

The active-site Nucleophile is the Asp39.

This sequence belongs to the pseudouridine synthase TruB family. Type 1 subfamily.

It carries out the reaction uridine(55) in tRNA = pseudouridine(55) in tRNA. In terms of biological role, responsible for synthesis of pseudouridine from uracil-55 in the psi GC loop of transfer RNAs. In Streptococcus thermophilus (strain ATCC BAA-250 / LMG 18311), this protein is tRNA pseudouridine synthase B.